The chain runs to 548 residues: Eukaryotic translation initiation factor 3 subunit D (548 aa).

Residue K53 is modified to N6-acetyllysine. The residue at position 161 (S161) is a Phosphoserine. The interval 285–299 (DFDLLTVSETANEPP) is RNA gate. A disordered region spans residues 523–548 (PDGTFSSDEDEEEEEEEEEEEEEEET). S528 and S529 each carry phosphoserine. Residues 529 to 548 (SDEDEEEEEEEEEEEEEEET) show a composition bias toward acidic residues.

It belongs to the eIF-3 subunit D family. Component of the eukaryotic translation initiation factor 3 (eIF-3) complex, which is composed of 13 subunits: EIF3A, EIF3B, EIF3C, EIF3D, EIF3E, EIF3F, EIF3G, EIF3H, EIF3I, EIF3J, EIF3K, EIF3L and EIF3M. The eIF-3 complex appears to include 3 stable modules: module A is composed of EIF3A, EIF3B, EIF3G and EIF3I; module B is composed of EIF3F, EIF3H, and EIF3M; and module C is composed of EIF3C, EIF3D, EIF3E, EIF3K and EIF3L. EIF3C of module C binds EIF3B of module A and EIF3H of module B, thereby linking the three modules. EIF3J is a labile subunit that binds to the eIF-3 complex via EIF3B. The eIF-3 complex interacts with RPS6KB1 under conditions of nutrient depletion. Mitogenic stimulation leads to binding and activation of a complex composed of MTOR and RPTOR, leading to phosphorylation and release of RPS6KB1 and binding of EIF4B to eIF-3. In terms of assembly, (Microbial infection) Interacts with Norwalk virus VPg protein.

Its subcellular location is the cytoplasm. MRNA cap-binding component of the eukaryotic translation initiation factor 3 (eIF-3) complex, a complex required for several steps in the initiation of protein synthesis of a specialized repertoire of mRNAs. The eIF-3 complex associates with the 40S ribosome and facilitates the recruitment of eIF-1, eIF-1A, eIF-2:GTP:methionyl-tRNAi and eIF-5 to form the 43S pre-initiation complex (43S PIC). The eIF-3 complex stimulates mRNA recruitment to the 43S PIC and scanning of the mRNA for AUG recognition. The eIF-3 complex is also required for disassembly and recycling of post-termination ribosomal complexes and subsequently prevents premature joining of the 40S and 60S ribosomal subunits prior to initiation. The eIF-3 complex specifically targets and initiates translation of a subset of mRNAs involved in cell proliferation, including cell cycling, differentiation and apoptosis, and uses different modes of RNA stem-loop binding to exert either translational activation or repression. In the eIF-3 complex, EIF3D specifically recognizes and binds the 7-methylguanosine cap of a subset of mRNAs. Functionally, (Microbial infection) In case of FCV infection, plays a role in the ribosomal termination-reinitiation event leading to the translation of VP2. In Homo sapiens (Human), this protein is Eukaryotic translation initiation factor 3 subunit D.